A 122-amino-acid polypeptide reads, in one-letter code: Large ribosomal subunit protein bL17 (122 aa).

Belongs to the bacterial ribosomal protein bL17 family. Part of the 50S ribosomal subunit. Contacts protein L32.

This is Large ribosomal subunit protein bL17 from Staphylococcus epidermidis (strain ATCC 35984 / DSM 28319 / BCRC 17069 / CCUG 31568 / BM 3577 / RP62A).